The primary structure comprises 182 residues: MAKYYLIHGVVEDKPEKIVKILSDGYLFASSYSTQQGFSGIPLDYVYFSRLGDVNVFMGGFKFILSTKILYKRSFRYALNWVGSDINRTTKINYRYDNVDKVLDEINTHITNGTYSLSPSIDTLHEIILKKKVNLHRYLVAVSDGNYLTPEITDYLKTNYPNVKILTEIPSSADKLSEILEK.

Belongs to the mimivirus L28/L54 family.

This is an uncharacterized protein from Acanthamoeba polyphaga (Amoeba).